A 402-amino-acid chain; its full sequence is UDP-glucose 6-dehydrogenase (402 aa).

Residues 2–19, Val11, Asp29, Lys34, Thr83, Thr118, and Glu145 each bind NAD(+); that span reads KIAV…GVLL. Substrate contacts are provided by residues 141–145, Lys204, Asn208, 249–253, and Gly257; these read EFLRE and YNNPS. Tyr259 provides a ligand contact to NAD(+). The Nucleophile role is filled by Cys260. Lys263 is an NAD(+) binding site. Lys320 lines the substrate pocket. Arg327 serves as a coordination point for NAD(+).

This sequence belongs to the UDP-glucose/GDP-mannose dehydrogenase family.

The catalysed reaction is UDP-alpha-D-glucose + 2 NAD(+) + H2O = UDP-alpha-D-glucuronate + 2 NADH + 3 H(+). It functions in the pathway nucleotide-sugar biosynthesis; UDP-alpha-D-glucuronate biosynthesis; UDP-alpha-D-glucuronate from UDP-alpha-D-glucose: step 1/1. Catalyzes the formation of UDP-glucuronic acid which is required for capsular hyaluronic acid synthesis. This is UDP-glucose 6-dehydrogenase (hasB) from Streptococcus pyogenes serotype M3 (strain ATCC BAA-595 / MGAS315).